The following is a 312-amino-acid chain: Cytochrome c biogenesis protein CcsA (312 aa).

The next 8 helical transmembrane spans lie at Leu18 to Phe38, Phe48 to Ser68, Ile73 to Leu93, Ile102 to Leu122, Val148 to Ile168, Ser216 to Asn236, Thr250 to Ile267, and Phe279 to Ile299.

Belongs to the CcmF/CycK/Ccl1/NrfE/CcsA family. In terms of assembly, may interact with ccs1.

The protein localises to the cellular thylakoid membrane. Required during biogenesis of c-type cytochromes (cytochrome c6 and cytochrome f) at the step of heme attachment. This Prochlorococcus marinus (strain MIT 9515) protein is Cytochrome c biogenesis protein CcsA.